We begin with the raw amino-acid sequence, 45 residues long: Large ribosomal subunit protein bL34 (45 aa).

This sequence belongs to the bacterial ribosomal protein bL34 family.

The chain is Large ribosomal subunit protein bL34 from Opitutus terrae (strain DSM 11246 / JCM 15787 / PB90-1).